The primary structure comprises 301 residues: Oxygen-dependent coproporphyrinogen-III oxidase (301 aa).

Ser-92 contacts substrate. His-96 and His-106 together coordinate a divalent metal cation. His-106 (proton donor) is an active-site residue. A substrate-binding site is contributed by 108–110 (NVR). The a divalent metal cation site is built by His-145 and His-175. An important for dimerization region spans residues 240-275 (YVEFNLVWDRGTLFGLQTGGRTESILMSMPPLVRWE). 258-260 (GGR) provides a ligand contact to substrate.

This sequence belongs to the aerobic coproporphyrinogen-III oxidase family. In terms of assembly, homodimer. A divalent metal cation serves as cofactor.

The protein resides in the cytoplasm. It catalyses the reaction coproporphyrinogen III + O2 + 2 H(+) = protoporphyrinogen IX + 2 CO2 + 2 H2O. The protein operates within porphyrin-containing compound metabolism; protoporphyrin-IX biosynthesis; protoporphyrinogen-IX from coproporphyrinogen-III (O2 route): step 1/1. Involved in the heme biosynthesis. Catalyzes the aerobic oxidative decarboxylation of propionate groups of rings A and B of coproporphyrinogen-III to yield the vinyl groups in protoporphyrinogen-IX. The protein is Oxygen-dependent coproporphyrinogen-III oxidase of Cronobacter sakazakii (strain ATCC BAA-894) (Enterobacter sakazakii).